The sequence spans 418 residues: Putative ion-transport protein YfeO (418 aa).

The next 12 membrane-spanning stretches (helical) occupy residues 10-30 (LLLS…LIVV), 54-74 (DSPL…GLVI), 99-119 (ALPG…SLGP), 120-140 (EHPI…RLLP), 149-169 (ILAS…AALI), 186-206 (LFAP…FFHP), 223-243 (ILSG…AVWC), 258-278 (VLVL…GGPV), 300-320 (DYFL…ASGF), 322-342 (GGRI…LHEH), 343-363 (VPAV…VLVV), and 371-391 (LFMA…CIVM).

The protein belongs to the chloride channel (TC 2.A.49) family.

The protein localises to the cell membrane. In Shigella boydii serotype 4 (strain Sb227), this protein is Putative ion-transport protein YfeO.